Consider the following 440-residue polypeptide: Probable exopolygalacturonase C (440 aa).

The signal sequence occupies residues 1–21 (MLITNPALLGILASLVPLALG). N-linked (GlcNAc...) asparagine glycosylation is found at asparagine 84 and asparagine 151. PbH1 repeat units lie at residues 188-210 (GDDI…PFNT), 217-238 (GTNI…AVNT), and 240-261 (SHNI…SIGS). Asparagine 219 carries an N-linked (GlcNAc...) asparagine glycan. Residue aspartate 231 is the Proton donor of the active site. Histidine 255 is an active-site residue. N-linked (GlcNAc...) asparagine glycosylation occurs at asparagine 271. A PbH1 4 repeat occupies 272–293 (ITNLRFEDVTVIDALYAARFKS). N-linked (GlcNAc...) asparagine glycosylation occurs at asparagine 313. Cysteine 389 and cysteine 395 form a disulfide bridge. Asparagine 434 is a glycosylation site (N-linked (GlcNAc...) asparagine).

Belongs to the glycosyl hydrolase 28 family.

It localises to the secreted. The catalysed reaction is [(1-&gt;4)-alpha-D-galacturonosyl](n) + H2O = alpha-D-galacturonate + [(1-&gt;4)-alpha-D-galacturonosyl](n-1). In terms of biological role, specific in hydrolyzing the terminal glycosidic bond of polygalacturonic acid and oligogalacturonates. The chain is Probable exopolygalacturonase C (pgxC) from Aspergillus fumigatus (strain ATCC MYA-4609 / CBS 101355 / FGSC A1100 / Af293) (Neosartorya fumigata).